A 361-amino-acid chain; its full sequence is S-adenosylmethionine decarboxylase proenzyme (361 aa).

Residues glutamate 11 and glutamate 14 contribute to the active site. Serine 71 serves as the catalytic Schiff-base intermediate with substrate; via pyruvic acid. Residue serine 71 is modified to Pyruvic acid (Ser); by autocatalysis. Cysteine 85 serves as the catalytic Proton donor; for catalytic activity. Catalysis depends on proton acceptor; for processing activity residues serine 234 and histidine 247.

Belongs to the eukaryotic AdoMetDC family. The cofactor is pyruvate. Is synthesized initially as an inactive proenzyme. Formation of the active enzyme involves a self-maturation process in which the active site pyruvoyl group is generated from an internal serine residue via an autocatalytic post-translational modification. Two non-identical subunits are generated from the proenzyme in this reaction, and the pyruvate is formed at the N-terminus of the alpha chain, which is derived from the carboxyl end of the proenzyme. The post-translation cleavage follows an unusual pathway, termed non-hydrolytic serinolysis, in which the side chain hydroxyl group of the serine supplies its oxygen atom to form the C-terminus of the beta chain, while the remainder of the serine residue undergoes an oxidative deamination to produce ammonia and the pyruvoyl group blocking the N-terminus of the alpha chain.

It catalyses the reaction S-adenosyl-L-methionine + H(+) = S-adenosyl 3-(methylsulfanyl)propylamine + CO2. It functions in the pathway amine and polyamine biosynthesis; S-adenosylmethioninamine biosynthesis; S-adenosylmethioninamine from S-adenosyl-L-methionine: step 1/1. The polypeptide is S-adenosylmethionine decarboxylase proenzyme (SAMDC) (Daucus carota (Wild carrot)).